A 103-amino-acid chain; its full sequence is N(4)-acetylcytidine amidohydrolase (103 aa).

Residues 6 to 101 (ITFFQRFQDD…QTQFYVIEFK (96 aa)) form the ASCH domain. Lys21 (proton acceptor) is an active-site residue. Thr24 serves as the catalytic Nucleophile. Glu74 functions as the Proton donor in the catalytic mechanism.

The protein belongs to the N(4)-acetylcytidine amidohydrolase family.

The enzyme catalyses N(4)-acetylcytidine + H2O = cytidine + acetate + H(+). It carries out the reaction N(4)-acetyl-2'-deoxycytidine + H2O = 2'-deoxycytidine + acetate + H(+). It catalyses the reaction N(4)-acetylcytosine + H2O = cytosine + acetate + H(+). Functionally, catalyzes the hydrolysis of N(4)-acetylcytidine (ac4C). This is N(4)-acetylcytidine amidohydrolase (yqfB) from Escherichia coli O8 (strain IAI1).